A 202-amino-acid chain; its full sequence is Hydrogenase expression/formation protein HoxM (202 aa).

Positions 15, 61, and 92 each coordinate Ni(2+).

This sequence belongs to the peptidase A31 family.

Functionally, absolutely required for hydrogenase activity. Mediates the attachment of hydrogenase to the bacterial membrane; attachment is a requirement for enzymatic activity. This is Hydrogenase expression/formation protein HoxM (hoxM) from Cupriavidus necator (strain ATCC 17699 / DSM 428 / KCTC 22496 / NCIMB 10442 / H16 / Stanier 337) (Ralstonia eutropha).